The following is a 732-amino-acid chain: Catalase-peroxidase (732 aa).

The segment at 1-29 is disordered; it reads MTTESKCPFSGGGKPNTPRRGPSNQDWWP. Residues 96–223 constitute a cross-link (tryptophyl-tyrosyl-methioninium (Trp-Tyr) (with M-249)); it reads WHSAGTYRIG…LAAVQMGLIY (128 aa). The active-site Proton acceptor is H97. The tryptophyl-tyrosyl-methioninium (Tyr-Met) (with W-96) cross-link spans 223–249; the sequence is YVNPEGPDGNPDPVAAARDIRETFARM. Residue H264 coordinates heme b.

It belongs to the peroxidase family. Peroxidase/catalase subfamily. Homodimer or homotetramer. It depends on heme b as a cofactor. Formation of the three residue Trp-Tyr-Met cross-link is important for the catalase, but not the peroxidase activity of the enzyme.

It carries out the reaction H2O2 + AH2 = A + 2 H2O. The catalysed reaction is 2 H2O2 = O2 + 2 H2O. Functionally, bifunctional enzyme with both catalase and broad-spectrum peroxidase activity. The polypeptide is Catalase-peroxidase (Serratia proteamaculans (strain 568)).